A 761-amino-acid chain; its full sequence is T-box protein 1 (761 aa).

Disordered stretches follow at residues 1-85 and 167-210; these read MLGR…QPLT and QTDP…CSSP. Composition is skewed to polar residues over residues 37 to 61 and 167 to 179; these read DLQN…NQAG and QTDP…FPQA. Low complexity-rich tracts occupy residues 180 to 191 and 198 to 210; these read SPSDLSTTSSQS and SSPS…CSSP. Positions 287–456 form a DNA-binding region, T-box; that stretch reads LWRKFHEHRT…HNPFAKGFRD (170 aa). Residues 496–510 show a composition bias toward polar residues; the sequence is TTGFPCQTNPTQRSN. 3 disordered regions span residues 496-515, 545-612, and 637-687; these read TTGF…QHEG, SGDA…TPAH, and VCSS…LLTT. Residues 600 to 612 show a composition bias toward basic and acidic residues; it reads GCERSNEKHTPAH. Over residues 637-646 the composition is skewed to polar residues; that stretch reads VCSSDNSNPD. Low complexity predominate over residues 656–687; it reads SPAGSGSPSVTSGTSLFTSGSSAAPSPPLLTT.

Its subcellular location is the nucleus. Probable transcriptional regulator involved in developmental processes. This is T-box protein 1 (tbr1) from Patiria pectinifera (Starfish).